The following is a 92-amino-acid chain: Protein S100-B (92 aa).

Ser-2 carries the post-translational modification N-acetylserine. 2 consecutive EF-hand domains span residues 13 to 48 (DVFH…LEEI) and 49 to 84 (KEQE…ITTA). His-16 lines the Zn(2+) pocket. 3 residues coordinate Ca(2+): Ser-19, Glu-22, and Asp-24. Zn(2+) is bound at residue His-26. Residues Asp-62, Asp-64, Asp-66, Glu-68, and Glu-73 each coordinate Ca(2+). Residues His-86 and His-91 each contribute to the Zn(2+) site.

This sequence belongs to the S-100 family. In terms of assembly, dimer of either two alpha chains, or two beta chains, or one alpha and one beta chain. The S100B dimer binds two molecules of STK38. Interacts with CACYBP in a calcium-dependent manner. Interacts with ATAD3A; this interaction probably occurs in the cytosol prior to ATAD3A mitochondrial targeting. Interacts with S100A6. The S100B dimer interacts with two molecules of CAPZA1. Interacts with AGER. Interacts with PPP5C (via TPR repeats); the interaction is calcium-dependent and modulates PPP5C activity. Interacts with TPPP; this interaction inhibits TPPP dimerization. Interacts with isoform CLSTN3beta of CLSTN3; interaction promotes secretion.

The protein localises to the cytoplasm. Its subcellular location is the nucleus. The protein resides in the secreted. Its function is as follows. Small zinc- and- and calcium-binding protein that is highly expressed in astrocytes and constitutes one of the most abundant soluble proteins in brain. Weakly binds calcium but binds zinc very tightly-distinct binding sites with different affinities exist for both ions on each monomer. Physiological concentrations of potassium ion antagonize the binding of both divalent cations, especially affecting high-affinity calcium-binding sites. Acts as a neurotrophic factor that promotes astrocytosis and axonal proliferation. Involved in innervation of thermogenic adipose tissue by acting as an adipocyte-derived neurotrophic factor that promotes sympathetic innervation of adipose tissue. Binds to and initiates the activation of STK38 by releasing autoinhibitory intramolecular interactions within the kinase. Interaction with AGER after myocardial infarction may play a role in myocyte apoptosis by activating ERK1/2 and p53/TP53 signaling. Could assist ATAD3A cytoplasmic processing, preventing aggregation and favoring mitochondrial localization. May mediate calcium-dependent regulation on many physiological processes by interacting with other proteins, such as TPR-containing proteins, and modulating their activity. This Bos taurus (Bovine) protein is Protein S100-B (S100B).